The chain runs to 338 residues: Elongation factor Ts, mitochondrial (338 aa).

A mitochondrion-targeting transit peptide spans 1 to 55 (MSLLRSLRLCLVARTGSCPLSALGPGPLLPSLQAGLPLLQSPQQWHTFHSGSWLS). N6-succinyllysine occurs at positions 89, 146, and 205. Residue S283 is modified to Phosphoserine.

It belongs to the EF-Ts family.

It localises to the mitochondrion. Its function is as follows. Associates with the EF-Tu.GDP complex and induces the exchange of GDP to GTP. It remains bound to the aminoacyl-tRNA.EF-Tu.GTP complex up to the GTP hydrolysis stage on the ribosome. This Bos taurus (Bovine) protein is Elongation factor Ts, mitochondrial.